A 121-amino-acid chain; its full sequence is Large ribosomal subunit protein uL18 (121 aa).

It belongs to the universal ribosomal protein uL18 family. As to quaternary structure, part of the 50S ribosomal subunit; part of the 5S rRNA/L5/L18/L25 subcomplex. Contacts the 5S and 23S rRNAs.

Functionally, this is one of the proteins that bind and probably mediate the attachment of the 5S RNA into the large ribosomal subunit, where it forms part of the central protuberance. This is Large ribosomal subunit protein uL18 from Acidovorax ebreus (strain TPSY) (Diaphorobacter sp. (strain TPSY)).